A 481-amino-acid polypeptide reads, in one-letter code: Inosine-5'-monophosphate dehydrogenase (481 aa).

CBS domains follow at residues 92–148 and 152–209; these read VIND…SKKV and MTKM…PEAN. Residues D244 and 293 to 295 contribute to the NAD(+) site; that span reads GIG. Positions 295 and 297 each coordinate K(+). Residue S298 coordinates IMP. C300 serves as a coordination point for K(+). C300 serves as the catalytic Thioimidate intermediate. IMP contacts are provided by residues 333–335, 356–357, and 380–384; these read DGG, GS, and YRGMG. Catalysis depends on R396, which acts as the Proton acceptor. E410 lines the IMP pocket. Residues E464, S465, and H466 each contribute to the K(+) site.

This sequence belongs to the IMPDH/GMPR family. Homotetramer. Requires K(+) as cofactor.

The catalysed reaction is IMP + NAD(+) + H2O = XMP + NADH + H(+). It participates in purine metabolism; XMP biosynthesis via de novo pathway; XMP from IMP: step 1/1. Its activity is regulated as follows. Mycophenolic acid (MPA) is a non-competitive inhibitor that prevents formation of the closed enzyme conformation by binding to the same site as the amobile flap. In contrast, mizoribine monophosphate (MZP) is a competitive inhibitor that induces the closed conformation. MPA is a potent inhibitor of mammalian IMPDHs but a poor inhibitor of the bacterial enzymes. MZP is a more potent inhibitor of bacterial IMPDH. Functionally, catalyzes the conversion of inosine 5'-phosphate (IMP) to xanthosine 5'-phosphate (XMP), the first committed and rate-limiting step in the de novo synthesis of guanine nucleotides, and therefore plays an important role in the regulation of cell growth. This is Inosine-5'-monophosphate dehydrogenase from Helicobacter pylori (strain ATCC 700392 / 26695) (Campylobacter pylori).